The sequence spans 245 residues: 1-(5-phosphoribosyl)-5-[(5-phosphoribosylamino)methylideneamino] imidazole-4-carboxamide isomerase (245 aa).

Asp8 functions as the Proton acceptor in the catalytic mechanism. Asp130 functions as the Proton donor in the catalytic mechanism.

The protein belongs to the HisA/HisF family.

The protein localises to the cytoplasm. The enzyme catalyses 1-(5-phospho-beta-D-ribosyl)-5-[(5-phospho-beta-D-ribosylamino)methylideneamino]imidazole-4-carboxamide = 5-[(5-phospho-1-deoxy-D-ribulos-1-ylimino)methylamino]-1-(5-phospho-beta-D-ribosyl)imidazole-4-carboxamide. It participates in amino-acid biosynthesis; L-histidine biosynthesis; L-histidine from 5-phospho-alpha-D-ribose 1-diphosphate: step 4/9. This chain is 1-(5-phosphoribosyl)-5-[(5-phosphoribosylamino)methylideneamino] imidazole-4-carboxamide isomerase, found in Pseudomonas putida (strain ATCC 47054 / DSM 6125 / CFBP 8728 / NCIMB 11950 / KT2440).